The chain runs to 308 residues: HPr kinase/phosphorylase (308 aa).

Active-site residues include H138 and K159. G153 to S160 is an ATP binding site. S160 is a binding site for Mg(2+). D177 serves as the catalytic Proton acceptor; for phosphorylation activity. Proton donor; for dephosphorylation activity. Residues L201–D210 are important for the catalytic mechanism of both phosphorylation and dephosphorylation. E202 contributes to the Mg(2+) binding site. Residue R243 is part of the active site. The interval Q264 to R269 is important for the catalytic mechanism of dephosphorylation.

It belongs to the HPrK/P family. Homohexamer. Mg(2+) is required as a cofactor.

The catalysed reaction is [HPr protein]-L-serine + ATP = [HPr protein]-O-phospho-L-serine + ADP + H(+). It carries out the reaction [HPr protein]-O-phospho-L-serine + phosphate + H(+) = [HPr protein]-L-serine + diphosphate. In terms of biological role, catalyzes the ATP- as well as the pyrophosphate-dependent phosphorylation of a specific serine residue in HPr, a phosphocarrier protein of the phosphoenolpyruvate-dependent sugar phosphotransferase system (PTS). HprK/P also catalyzes the pyrophosphate-producing, inorganic phosphate-dependent dephosphorylation (phosphorolysis) of seryl-phosphorylated HPr (P-Ser-HPr). This Bordetella bronchiseptica (strain ATCC BAA-588 / NCTC 13252 / RB50) (Alcaligenes bronchisepticus) protein is HPr kinase/phosphorylase.